Consider the following 137-residue polypeptide: Large ribosomal subunit protein uL16 (137 aa).

The protein belongs to the universal ribosomal protein uL16 family. Part of the 50S ribosomal subunit.

Functionally, binds 23S rRNA and is also seen to make contacts with the A and possibly P site tRNAs. The protein is Large ribosomal subunit protein uL16 of Allorhizobium ampelinum (strain ATCC BAA-846 / DSM 112012 / S4) (Agrobacterium vitis (strain S4)).